The sequence spans 387 residues: 23S rRNA (uracil(747)-C(5))-methyltransferase RlmC (387 aa).

[4Fe-4S] cluster contacts are provided by Cys-3, Cys-11, Cys-14, and Cys-86. Positions 211, 240, 269, and 319 each coordinate S-adenosyl-L-methionine. The active-site Nucleophile is the Cys-346.

This sequence belongs to the class I-like SAM-binding methyltransferase superfamily. RNA M5U methyltransferase family. RlmC subfamily.

The catalysed reaction is uridine(747) in 23S rRNA + S-adenosyl-L-methionine = 5-methyluridine(747) in 23S rRNA + S-adenosyl-L-homocysteine + H(+). Functionally, catalyzes the formation of 5-methyl-uridine at position 747 (m5U747) in 23S rRNA. This chain is 23S rRNA (uracil(747)-C(5))-methyltransferase RlmC, found in Pasteurella multocida (strain Pm70).